A 260-amino-acid chain; its full sequence is Indole-3-glycerol phosphate synthase (260 aa).

Belongs to the TrpC family.

The catalysed reaction is 1-(2-carboxyphenylamino)-1-deoxy-D-ribulose 5-phosphate + H(+) = (1S,2R)-1-C-(indol-3-yl)glycerol 3-phosphate + CO2 + H2O. Its pathway is amino-acid biosynthesis; L-tryptophan biosynthesis; L-tryptophan from chorismate: step 4/5. This chain is Indole-3-glycerol phosphate synthase, found in Thermoanaerobacter pseudethanolicus (strain ATCC 33223 / 39E) (Clostridium thermohydrosulfuricum).